A 503-amino-acid polypeptide reads, in one-letter code: Interferon regulatory factor 7 (503 aa).

Residues 11–126 (RVLFGEWLLG…DPHKVYALSR (116 aa)) constitute a DNA-binding region (IRF tryptophan pentad repeat). Positions 69-88 (RWPPSSRGGGPPPEAETAER) are disordered. Residue Lys92 is modified to N6-acetyllysine; by KAT2A and KAT2B. 2 disordered regions span residues 133–156 (GPGT…GPPG) and 242–277 (TTPS…SPSA). A compositionally biased stretch (pro residues) spans 146–156 (AVPPPQGGPPG). A necessary for the interaction with NMI region spans residues 284 to 456 (PSPGALDVTI…SLVLVKLEPW (173 aa)). Lys375 participates in a covalent cross-link: Glycyl lysine isopeptide (Lys-Gly) (interchain with G-Cter in ubiquitin). Residues Lys444 and Lys446 each participate in a glycyl lysine isopeptide (Lys-Gly) (interchain with G-Cter in SUMO) cross-link. Residues Ser471, Ser472, and Ser475 each carry the phosphoserine modification. Phosphoserine; by TBK1 and IKKE occurs at positions 477 and 479. Residues Ser483, Ser484, and Ser487 each carry the phosphoserine modification.

Belongs to the IRF family. Monomer. Homodimer; phosphorylation-induced. Heterodimer with IRF3. Interacts with TICAM1 and TICAM2. Interacts with MYD88 and TRAF6. Interacts with TRIM35. Interacts with NMI; the interaction is direct and leads to the inhibition of IRF7-mediated type I IFN production. Interacts with GBP4; preventing interaction between TRAF6 and IRF7, resulting in impaired TRAF6-mediated IRF7 ubiquitination. As to quaternary structure, (Microbial infection) Interacts with Epstein-Barr virus LF2 and LMP1. In terms of assembly, (Microbial infection) Interacts with rotavirus A NSP1; this interaction leads to the proteasome-dependent degradation of IRF7. (Microbial infection) Interacts with human herpes virus 8/HHV-8 proteins ORF45 and vIRF-1. As to quaternary structure, (Microbial infection) Interacts with human T-cell leukemia virus 1/HTLV-1 protein HBZ. In terms of assembly, (Microbial infection) Interacts with Seneca Valley virus protease 3C; this interaction is involved in the suppression of IRF7 expression and phosphorylation by the virus. (Microbial infection) Interacts with ebolavirus VP35; this interaction mediates the sumoylation of IRF7 and contributes to the viral inhibition of IFN-type I production. As to quaternary structure, (Microbial infection) Interacts with severe fever with thrombocytopenia syndrome virus (SFTSV) NSs; this interaction sequesters IRF7 in NSs-induced cytoplasmic inclusion bodies. In terms of assembly, (Microbial infection) Interacts with herpes virus 8/HHV-8 protein vIRF-4; this interaction prevents IRF7 dimerization and subsequent activation. (Microbial infection) Interacts with human metapneumovirus protein M2-2; this interaction prevents IRF7 phosphorlyation and subsequent TLR7/9-dependent IFN-alpha induction. In terms of processing, acetylation inhibits its DNA-binding ability and activity. In response to a viral infection, phosphorylated on Ser-477 and Ser-479 by TBK1 and IKBKE1. Phosphorylation, and subsequent activation is inhibited by vaccinia virus protein E3. In TLR7- and TLR9-mediated signaling pathway, phosphorylated by IRAK1. Post-translationally, TRAF6-mediated ubiquitination is required for IRF7 activation. TRIM35 mediates IRF7 'Lys-48'-linked polyubiquitination and subsequent proteasomal degradation. Ubiquitinated by UBE3C, leading to its degradation. In terms of processing, sumoylated by TRIM28, which inhibits its transactivation activity. (Microbial infection) Cleaved and inactivated by the protease 3C of enterovirus 71 allowing the virus to disrupt the host type I interferon production. Post-translationally, (Microbial infection) Cleaved and inactivated by the protease 3C of human enterovirus 68D (EV68) allowing the virus to disrupt the host type I interferon production. In terms of processing, 'Lys-48'-linked polyubiquitination and subsequent proteasomal degradation is NMI-dependent in response to Sendai virus infection. 'Lys-63'-linked ubiquitination by NEURL3 promotes IRF7 activation. As to expression, expressed predominantly in spleen, thymus and peripheral blood leukocytes.

The protein localises to the nucleus. The protein resides in the cytoplasm. In the absence of viral infection, maintained as a monomer in an autoinhibited state and phosphorylation disrupts this autoinhibition leading to the liberation of the DNA-binding and dimerization activities and its nuclear localization where it can activate type I IFN and ISG genes. Functionally, key transcriptional regulator of type I interferon (IFN)-dependent immune responses and plays a critical role in the innate immune response against DNA and RNA viruses. Regulates the transcription of type I IFN genes (IFN-alpha and IFN-beta) and IFN-stimulated genes (ISG) by binding to an interferon-stimulated response element (ISRE) in their promoters. Can efficiently activate both the IFN-beta (IFNB) and the IFN-alpha (IFNA) genes and mediate their induction via both the virus-activated, MyD88-independent pathway and the TLR-activated, MyD88-dependent pathway. Induces transcription of ubiquitin hydrolase USP25 mRNA in response to lipopolysaccharide (LPS) or viral infection in a type I IFN-dependent manner. Required during both the early and late phases of the IFN gene induction but is more critical for the late than for the early phase. Exists in an inactive form in the cytoplasm of uninfected cells and following viral infection, double-stranded RNA (dsRNA), or toll-like receptor (TLR) signaling, becomes phosphorylated by IKBKE and TBK1 kinases. This induces a conformational change, leading to its dimerization and nuclear localization where along with other coactivators it can activate transcription of the type I IFN and ISG genes. Can also play a role in regulating adaptive immune responses by inducing PSMB9/LMP2 expression, either directly or through induction of IRF1. Binds to the Q promoter (Qp) of EBV nuclear antigen 1 a (EBNA1) and may play a role in the regulation of EBV latency. Can activate distinct gene expression programs in macrophages and regulate the anti-tumor properties of primary macrophages. The sequence is that of Interferon regulatory factor 7 (IRF7) from Homo sapiens (Human).